The following is a 216-amino-acid chain: Somatotropin (216 aa).

The first 26 residues, 1–26 (MAAGPRNSVLLAFALLCLPWPQEVGT), serve as a signal peptide directing secretion. His45 serves as a coordination point for Zn(2+). Cys78 and Cys189 form a disulfide bridge. A Phosphoserine modification is found at Ser131. A Zn(2+)-binding site is contributed by Glu198. Cys206 and Cys214 are disulfide-bonded.

Belongs to the somatotropin/prolactin family.

The protein resides in the secreted. In terms of biological role, plays an important role in growth control. Its major role in stimulating body growth is to stimulate the liver and other tissues to secrete IGF1. It stimulates both the differentiation and proliferation of myoblasts. It also stimulates amino acid uptake and protein synthesis in muscle and other tissues. The protein is Somatotropin (GH1) of Felis catus (Cat).